Consider the following 215-residue polypeptide: Transcription factor LAX PANICLE 1 (215 aa).

The disordered stretch occupies residues 1-48 (MHDPRGFPIHPQPYHLHPTAGGLGEGRMRGGGRRRPGAKLSTDPQSVA). The basic motif; degenerate stretch occupies residues 40–53 (LSTDPQSVAARERR). One can recognise a bHLH domain in the interval 40-89 (LSTDPQSVAARERRHRISDRFRVLRSLVPGGSKMDTVSMLEQAIHYVKFL). The segment at 54-89 (HRISDRFRVLRSLVPGGSKMDTVSMLEQAIHYVKFL) is helix-loop-helix motif.

The protein belongs to the bHLH protein family. Efficient DNA binding requires dimerization with another bHLH protein. Interacts with LAX2. Expressed in the boundary between the shoot apical meristem (SAM) and the region of new meristem formation.

It localises to the nucleus. Its function is as follows. Transcription factor that seems to regulate organogenesis in postembryonic development. Involved in the regulation of shoot branching by controlling axillary meristem initiation. Functions in association with LAX2 to regulate the process of AM formation. Possesses transactivation activity in yeast. This is Transcription factor LAX PANICLE 1 from Oryza sativa subsp. japonica (Rice).